The primary structure comprises 374 residues: Coiled-coil domain-containing protein 89 (374 aa).

The segment at 1-38 (MRAPMPQKEQAPRMDTSPPEERLEKQNEKLNNQEEEME) is disordered. Thr16 is subject to Phosphothreonine. Positions 19–32 (PEERLEKQNEKLNN) are enriched in basic and acidic residues. Residues 19 to 350 (PEERLEKQNE…YDELRLQSEA (332 aa)) adopt a coiled-coil conformation.

Belongs to the CCDC89 family. Interacts with HEY1.

It is found in the cytoplasm. The protein localises to the nucleus. The sequence is that of Coiled-coil domain-containing protein 89 (CCDC89) from Macaca fascicularis (Crab-eating macaque).